Here is a 96-residue protein sequence, read N- to C-terminus: UPF0729 protein AGAP000931 (96 aa).

Residues 65-96 (VPPGHDPVGPTVAADTATSDAVDDAASSKKTL) form a disordered region. A compositionally biased stretch (low complexity) spans 75–96 (TVAADTATSDAVDDAASSKKTL).

It belongs to the UPF0729 family.

This Anopheles gambiae (African malaria mosquito) protein is UPF0729 protein AGAP000931.